Consider the following 176-residue polypeptide: Sarcoplasmic calcium-binding protein (176 aa).

Position 1 is an N-acetylthreonine (Thr-1). 4 EF-hand domains span residues 3 to 38 (YLVS…FTDL), 55 to 90 (KWWD…AFLA), 91 to 126 (TMTA…FGHE), and 127 to 160 (NESV…SFVT). 4 residues coordinate Ca(2+): Asp-16, Asn-18, Asp-20, and Asn-27. Residues Asp-104, Asp-106, Asp-108, Ser-110, and Glu-115 each contribute to the Ca(2+) site.

Functionally, like parvalbumins, SCPs seem to be more abundant in fast contracting muscles, but no functional relationship can be established from this distribution. The protein is Sarcoplasmic calcium-binding protein of Mizuhopecten yessoensis (Japanese scallop).